Reading from the N-terminus, the 184-residue chain is ATP synthase subunit delta (184 aa).

This sequence belongs to the ATPase delta chain family. In terms of assembly, F-type ATPases have 2 components, F(1) - the catalytic core - and F(0) - the membrane proton channel. F(1) has five subunits: alpha(3), beta(3), gamma(1), delta(1), epsilon(1). F(0) has three main subunits: a(1), b(2) and c(10-14). The alpha and beta chains form an alternating ring which encloses part of the gamma chain. F(1) is attached to F(0) by a central stalk formed by the gamma and epsilon chains, while a peripheral stalk is formed by the delta and b chains.

The protein resides in the cell membrane. In terms of biological role, f(1)F(0) ATP synthase produces ATP from ADP in the presence of a proton or sodium gradient. F-type ATPases consist of two structural domains, F(1) containing the extramembraneous catalytic core and F(0) containing the membrane proton channel, linked together by a central stalk and a peripheral stalk. During catalysis, ATP synthesis in the catalytic domain of F(1) is coupled via a rotary mechanism of the central stalk subunits to proton translocation. Functionally, this protein is part of the stalk that links CF(0) to CF(1). It either transmits conformational changes from CF(0) to CF(1) or is implicated in proton conduction. This is ATP synthase subunit delta from Amoebophilus asiaticus (strain 5a2).